The chain runs to 198 residues: Protein hunchback (198 aa).

Disordered regions lie at residues 16 to 116 (SHHH…NPMQ) and 158 to 198 (LTPP…KYMA). Over residues 17–31 (HHHHHHHAHHSHHQH) the composition is skewed to basic residues. Composition is skewed to low complexity over residues 35-46 (SNSNSNASSPHQ) and 68-83 (QQQQQQQQQQQQQQQQ). The span at 95–105 (PSPSNNDQNSP) shows a compositional bias: polar residues. Residues 179–198 (EPEKEHDLMSNSSEDMKYMA) show a composition bias toward basic and acidic residues.

Belongs to the hunchback C2H2-type zinc-finger protein family.

It localises to the nucleus. In terms of biological role, gap class segmentation protein that controls development of head structures. The protein is Protein hunchback (hb) of Drosophila cyrtoloma (Fruit fly).